We begin with the raw amino-acid sequence, 310 residues long: Homeobox protein dsc-1 (310 aa).

Residues 180–239 constitute a DNA-binding region (homeobox); sequence RRRFRTNFTELQSTFLEDSFKESHYPDHKAKKYMADFLKIPEDRITVWFQNRRAKWRRKE. Residues 262 to 310 form a disordered region; the sequence is CFSAQHPDDGPNAKHPNSFGIPNQPMSLDQFPMNTEQDFPEFPSLQEHQ. Residues 281-298 show a composition bias toward polar residues; sequence GIPNQPMSLDQFPMNTEQ.

In terms of tissue distribution, expressed in the bilateral sensory neurons AWA, AWB, AWC, ASE, FLP and PVD. Also expressed in the enteric intestinal and anal depressor muscles.

Its subcellular location is the nucleus. It localises to the cell projection. The protein localises to the axon. It is found in the cytoplasm. In terms of biological role, transcriptional regulator which plays a role in the expulsion step of defecation by controlling enteric muscle-specific expression of exp-1 which is required for enteric muscle contraction. Not required for exp-1 expression in the PDA neuron. Also involved in controlling the length of the defecation cycle. The chain is Homeobox protein dsc-1 from Caenorhabditis elegans.